The sequence spans 409 residues: Ingression protein 1 (409 aa).

A C2 domain is found at 1–114 (MSEEVWNGNQ…DPKEGYCTWY (114 aa)). The segment at 300–409 (LSYDEDDDDD…TRKRPPPRLS (110 aa)) is disordered. The segment covering 302-313 (YDEDDDDDDEND) has biased composition (acidic residues). The span at 315–328 (FYSSSHRVSHNYNQ) shows a compositional bias: polar residues. Low complexity predominate over residues 360–377 (LDSSSPNSHPHPSGLNSP). A compositionally biased stretch (polar residues) spans 384–399 (TTSNSNFNSRKNSMSP). Serine 392 carries the phosphoserine modification. The segment covering 400–409 (TRKRPPPRLS) has biased composition (basic residues).

The protein belongs to the INN1/fic1 family. In terms of assembly, interacts with CYK2, CYK3 and IQG1.

It is found in the bud neck. Functionally, required for the ingression of the plasma membrane into the bud neck at the end of cytokinesis, leading to the separation of the mother and daughter cells. Stimulates the synthesis of the primary septum (PS) by CHS2. In Saccharomyces cerevisiae (strain ATCC 204508 / S288c) (Baker's yeast), this protein is Ingression protein 1 (INN1).